The following is a 464-amino-acid chain: Argininosuccinate lyase (464 aa).

Belongs to the lyase 1 family. Argininosuccinate lyase subfamily.

Its subcellular location is the cytoplasm. It carries out the reaction 2-(N(omega)-L-arginino)succinate = fumarate + L-arginine. It functions in the pathway amino-acid biosynthesis; L-arginine biosynthesis; L-arginine from L-ornithine and carbamoyl phosphate: step 3/3. The polypeptide is Argininosuccinate lyase (Koribacter versatilis (strain Ellin345)).